An 804-amino-acid polypeptide reads, in one-letter code: Phenylalanine--tRNA ligase beta subunit (804 aa).

In terms of domain architecture, tRNA-binding spans 39 to 147; the sequence is GPSFSNVVVA…PNLPLGEDLA (109 aa). Residues 402–480 enclose the B5 domain; sequence ETVGEIHLRC…RIHGYDNIPV (79 aa). Mg(2+) is bound by residues Asp458, Asp464, Glu467, and Glu468. Residues 711 to 804 form the FDX-ACB domain; that stretch reads SRYPESSRDV…IIDQTGARVR (94 aa).

The protein belongs to the phenylalanyl-tRNA synthetase beta subunit family. Type 1 subfamily. In terms of assembly, tetramer of two alpha and two beta subunits. The cofactor is Mg(2+).

The protein localises to the cytoplasm. It carries out the reaction tRNA(Phe) + L-phenylalanine + ATP = L-phenylalanyl-tRNA(Phe) + AMP + diphosphate + H(+). The polypeptide is Phenylalanine--tRNA ligase beta subunit (Syntrophus aciditrophicus (strain SB)).